The chain runs to 850 residues: Receptor-like protein kinase ANXUR1 (850 aa).

The N-terminal stretch at 1 to 26 (MSGKTRILFFLTCLSFLLVFPTRSNG) is a signal peptide. The Extracellular portion of the chain corresponds to 27-429 (QDLALSCGTS…KKEFKNEKRH (403 aa)). Residues Asn114, Asn132, Asn292, Asn302, and Asn330 are each glycosylated (N-linked (GlcNAc...) asparagine). A helical transmembrane segment spans residues 430–450 (AFIIGSAGGVLAVLIGALCFT). Over 451 to 850 (AYKKKQGYQG…FSQIVNPKGR (400 aa)) the chain is Cytoplasmic. Residues 517–790 (FDDSNVIGVG…GDVLWNLEFA (274 aa)) form the Protein kinase domain. ATP contacts are provided by residues 523-531 (IGVGGFGKV) and Lys545. Asp641 serves as the catalytic Proton acceptor. Residues 796–850 (TADGTRHRTPNNGGSSEDLGRGGMAVNVAGRDDVSDLSSEDNTEIFSQIVNPKGR) form a disordered region. Positions 839 to 850 (EIFSQIVNPKGR) are enriched in polar residues.

It belongs to the protein kinase superfamily. Ser/Thr protein kinase family. In terms of tissue distribution, expressed in pollen, but not in pistils or seedlings.

The protein resides in the cell membrane. It carries out the reaction L-seryl-[protein] + ATP = O-phospho-L-seryl-[protein] + ADP + H(+). The enzyme catalyses L-threonyl-[protein] + ATP = O-phospho-L-threonyl-[protein] + ADP + H(+). Receptor-like protein kinase that controls pollen tube behavior by directing rupture at proper timing to release the sperm cell. This Arabidopsis thaliana (Mouse-ear cress) protein is Receptor-like protein kinase ANXUR1 (ANX1).